A 621-amino-acid polypeptide reads, in one-letter code: pH-response transcription factor pacc-1 (621 aa).

A compositionally biased stretch (polar residues) spans 1-14; the sequence is MSSTPAQENGTVNG. Residues 1–87 form a disordered region; it reads MSSTPAQENG…PTTASNSSAP (87 aa). Residues 15–87 are compositionally biased toward low complexity; the sequence is ANAAPAPAPA…PTTASNSSAP (73 aa). C2H2-type zinc fingers lie at residues 95–120, 131–155, and 161–183; these read LVCRWAECNERFTSAEVLYEHICEKH, LTCQWNSCRTTTVKRDHITSHVRVH, and HKCDFCGKCFKRPQDLKKHVKTH. 2 disordered regions span residues 395–539 and 566–621; these read PTYA…PETY and DEDD…PRIN. Composition is skewed to low complexity over residues 409 to 423 and 436 to 465; these read ASLASPLSATSPHSA and SYTSGHSPSTSSTSLSPTSRHSSTPSVSYP. The YPX[LI] motif 1 signature appears at 464 to 467; sequence YPTL. A compositionally biased stretch (polar residues) spans 476 to 486; that stretch reads PSTSGLGSNFT. The span at 502–511 shows a compositional bias: basic and acidic residues; sequence RAADEADRAP. Residues 515–525 show a composition bias toward polar residues; that stretch reads ASEQATVSSPS. Over residues 583-595 the composition is skewed to low complexity; sequence RNQQQRNQQQQQQ. The YPX[LI] motif 2 signature appears at 614–617; it reads YPVL.

This sequence belongs to the pacC/RIM101 family. Binds to DNA. Interacts with palA/prr-1, which binds to the two YPX[LI] motifs and is required for proteolytic processing. In terms of processing, activated by C-terminal proteolytic cleavage by signaling protease (probably palB/RIM13) at neutral to alkaline ambient pH.

The protein localises to the cytoplasm. Its subcellular location is the nucleus. In terms of biological role, transcription factor that mediates regulation of both acid- and alkaline-expressed genes in response to ambient pH. At alkaline ambient pH, activates transcription of alkaline-expressed genes (including pacc-1 itself) and represses transcription of acid-expressed genes. The sequence is that of pH-response transcription factor pacc-1 (pacc-1) from Neurospora crassa (strain ATCC 24698 / 74-OR23-1A / CBS 708.71 / DSM 1257 / FGSC 987).